The following is a 372-amino-acid chain: Probable arabinan endo-1,5-alpha-L-arabinosidase B (372 aa).

Positions 1 to 16 (MTVLVALFCLVTWTLC) are cleaved as a signal peptide. The segment covering 23–34 (STQGTQQPQQPE) has biased composition (low complexity). Positions 23 to 52 (STQGTQQPQQPEKTPHPHPQPEDAFPPTHA) are disordered. Aspartate 59 serves as the catalytic Proton acceptor. Asparagine 120 carries an N-linked (GlcNAc...) asparagine glycan. The Proton donor role is filled by glutamate 252. N-linked (GlcNAc...) asparagine glycosylation occurs at asparagine 363.

The protein belongs to the glycosyl hydrolase 43 family.

The protein localises to the secreted. The enzyme catalyses Endohydrolysis of (1-&gt;5)-alpha-arabinofuranosidic linkages in (1-&gt;5)-arabinans.. It functions in the pathway glycan metabolism; L-arabinan degradation. Endo-1,5-alpha-L-arabinanase involved in degradation of pectin. Its preferred substrate is linear 1,5-alpha-L-arabinan. The polypeptide is Probable arabinan endo-1,5-alpha-L-arabinosidase B (abnB) (Aspergillus fumigatus (strain ATCC MYA-4609 / CBS 101355 / FGSC A1100 / Af293) (Neosartorya fumigata)).